The following is a 260-amino-acid chain: tRNA pseudouridine synthase A (260 aa).

The active-site Nucleophile is the aspartate 51. Tyrosine 109 is a substrate binding site.

It belongs to the tRNA pseudouridine synthase TruA family. Homodimer.

The catalysed reaction is uridine(38/39/40) in tRNA = pseudouridine(38/39/40) in tRNA. Its function is as follows. Formation of pseudouridine at positions 38, 39 and 40 in the anticodon stem and loop of transfer RNAs. The polypeptide is tRNA pseudouridine synthase A (Albidiferax ferrireducens (strain ATCC BAA-621 / DSM 15236 / T118) (Rhodoferax ferrireducens)).